The following is a 224-amino-acid chain: LOB domain-containing protein 15 (224 aa).

The LOB domain maps to 44 to 145 (TPCAACKLLR…AELTAVRSEI (102 aa)). The disordered stretch occupies residues 171–224 (SGGVSVIAPPPQRPTTPPQPTTAHPPSPSSCVFSQPTTRDLEYGNIESENNYFG). Positions 178 to 198 (APPPQRPTTPPQPTTAHPPSP) are enriched in pro residues.

It belongs to the LOB domain-containing protein family. As to expression, expressed in young shoots, roots, stems, leaves and flowers.

This Arabidopsis thaliana (Mouse-ear cress) protein is LOB domain-containing protein 15 (LBD15).